The chain runs to 590 residues: Aspartate--tRNA ligase (590 aa).

Residue Glu174 participates in L-aspartate binding. The segment at 198–201 (QLMK) is aspartate. An L-aspartate-binding site is contributed by Arg220. ATP contacts are provided by residues 220–222 (RDE) and Gln229. His443 contributes to the L-aspartate binding site. Glu484 contacts ATP. Residue Arg491 participates in L-aspartate binding. Residue 536–539 (GLDR) coordinates ATP.

This sequence belongs to the class-II aminoacyl-tRNA synthetase family. Type 1 subfamily. As to quaternary structure, homodimer.

It is found in the cytoplasm. The catalysed reaction is tRNA(Asp) + L-aspartate + ATP = L-aspartyl-tRNA(Asp) + AMP + diphosphate. Functionally, catalyzes the attachment of L-aspartate to tRNA(Asp) in a two-step reaction: L-aspartate is first activated by ATP to form Asp-AMP and then transferred to the acceptor end of tRNA(Asp). In Lactococcus lactis subsp. cremoris (strain SK11), this protein is Aspartate--tRNA ligase.